A 238-amino-acid chain; its full sequence is Large ribosomal subunit protein uL1 (238 aa).

The protein belongs to the universal ribosomal protein uL1 family. Part of the 50S ribosomal subunit.

Its function is as follows. Binds directly to 23S rRNA. The L1 stalk is quite mobile in the ribosome, and is involved in E site tRNA release. Protein L1 is also a translational repressor protein, it controls the translation of the L11 operon by binding to its mRNA. The protein is Large ribosomal subunit protein uL1 of Salinispora arenicola (strain CNS-205).